A 58-amino-acid chain; its full sequence is Large ribosomal subunit protein uL30 (58 aa).

It belongs to the universal ribosomal protein uL30 family. In terms of assembly, part of the 50S ribosomal subunit.

This is Large ribosomal subunit protein uL30 from Pseudomonas savastanoi pv. phaseolicola (strain 1448A / Race 6) (Pseudomonas syringae pv. phaseolicola (strain 1448A / Race 6)).